A 331-amino-acid chain; its full sequence is D-alanine--D-alanine ligase (331 aa).

The ATP-grasp domain maps to 122–328 (KLWYDAIGIP…FHEFLADCIE (207 aa)). 152–207 (AFDKWGKLFVKAARQGSSVGCYSVTKIEQLSDAIDKAFGFSHQVLVEKAVKPRELE) serves as a coordination point for ATP. Positions 282, 295, and 297 each coordinate Mg(2+).

This sequence belongs to the D-alanine--D-alanine ligase family. It depends on Mg(2+) as a cofactor. The cofactor is Mn(2+).

It localises to the cytoplasm. It catalyses the reaction 2 D-alanine + ATP = D-alanyl-D-alanine + ADP + phosphate + H(+). It participates in cell wall biogenesis; peptidoglycan biosynthesis. In terms of biological role, cell wall formation. This chain is D-alanine--D-alanine ligase, found in Vibrio vulnificus (strain CMCP6).